The primary structure comprises 341 residues: Fructose-1,6-bisphosphatase, cytosolic (341 aa).

Mg(2+)-binding residues include Glu-71, Glu-100, Asp-121, Leu-123, and Asp-124. Residues 124 to 127 (DGCS), Asn-215, Tyr-247, Tyr-267, and Lys-277 each bind substrate. A Mg(2+)-binding site is contributed by Glu-283.

Belongs to the FBPase class 1 family. Requires Mg(2+) as cofactor.

It localises to the cytoplasm. It carries out the reaction beta-D-fructose 1,6-bisphosphate + H2O = beta-D-fructose 6-phosphate + phosphate. The polypeptide is Fructose-1,6-bisphosphatase, cytosolic (Beta vulgaris (Sugar beet)).